The chain runs to 708 residues: uncharacterized protein (708 aa).

Disordered regions lie at residues 1–79 (MHAR…RRSS), 119–301 (AGEF…IHQR), 349–390 (YLSH…GDEN), and 410–461 (SNSF…KRQR). The span at 65 to 74 (LPPPLPPPPV) shows a compositional bias: pro residues. Polar residues predominate over residues 238 to 249 (DEAQSKTGSSSA). Over residues 260–274 (SKVSEGSSSLSAGSG) the composition is skewed to low complexity. The span at 410–419 (SNSFPSSILR) shows a compositional bias: polar residues. The span at 442-461 (VGEKRPGEGSDLEEGSKRQR) shows a compositional bias: basic and acidic residues.

This is an uncharacterized protein from Arabidopsis thaliana (Mouse-ear cress).